Reading from the N-terminus, the 351-residue chain is DNA-directed RNA polymerase subunit alpha (351 aa).

Positions 1 to 236 (MSVNTKNWQE…DQLTLFVHFE (236 aa)) are alpha N-terminal domain (alpha-NTD). Positions 256 to 351 (DDANQLNRYL…AKKLEQELLG (96 aa)) are alpha C-terminal domain (alpha-CTD).

It belongs to the RNA polymerase alpha chain family. In terms of assembly, homodimer. The RNAP catalytic core consists of 2 alpha, 1 beta, 1 beta' and 1 omega subunit. When a sigma factor is associated with the core the holoenzyme is formed, which can initiate transcription.

It catalyses the reaction RNA(n) + a ribonucleoside 5'-triphosphate = RNA(n+1) + diphosphate. Functionally, DNA-dependent RNA polymerase catalyzes the transcription of DNA into RNA using the four ribonucleoside triphosphates as substrates. The sequence is that of DNA-directed RNA polymerase subunit alpha from Erythrobacter litoralis (strain HTCC2594).